A 622-amino-acid chain; its full sequence is Modification methylase LlaI (622 aa).

This sequence belongs to the N(4)/N(6)-methyltransferase family.

It catalyses the reaction a 2'-deoxyadenosine in DNA + S-adenosyl-L-methionine = an N(6)-methyl-2'-deoxyadenosine in DNA + S-adenosyl-L-homocysteine + H(+). Its function is as follows. An alpha subtype methylase that modifies unknown specific adenine residues, and protects the DNA from cleavage by the LlaI endonuclease. This chain is Modification methylase LlaI, found in Lactococcus lactis subsp. lactis (Streptococcus lactis).